A 358-amino-acid chain; its full sequence is MFKMVSSPHTHSGKLTAHIMLWAILAMMPAFFTQIYYFGFGVVLQSALAIGTAIIAEFIAIKLRGKKPLNYLSDFSVALTALILAMAIPPYAPYWIIIIGTLCAVLLGKQVYGGLGQNPFNPAMIGYVILLISFPLQMTTWMPPINLLQEPPTFSDAFSLIFSGLTTDGFTLSQLTHNIDGITQATPLDSAKIFYKSHTQLNDFYELIKLPIFMGNGTDFAQGWWQINVAFLAGGIFLILKRVIHWQIPVAMLVTFFCLATATAFTGFTHLSAISQLVSGAMMFGAFFIATDPVTASITPRGKIIFGALVGLFVYLIRYHGNYPDGVAFAILLSNICVPLIDHYTRPRVSGYPTKGRK.

The next 3 helical transmembrane spans lie at 24–44, 79–99, and 125–145; these read ILAM…GVVL, LTAL…IIII, and IGYV…MPPI. Threonine 186 carries the post-translational modification FMN phosphoryl threonine. The next 5 membrane-spanning stretches (helical) occupy residues 220–240, 248–268, 271–291, 297–317, and 321–341; these read FAQG…FLIL, IPVA…FTGF, LSAI…FIAT, SITP…VYLI, and GNYP…VPLI.

Belongs to the NqrB/RnfD family. In terms of assembly, the complex is composed of six subunits: RnfA, RnfB, RnfC, RnfD, RnfE and RnfG. Requires FMN as cofactor.

The protein localises to the cell inner membrane. In terms of biological role, part of a membrane-bound complex that couples electron transfer with translocation of ions across the membrane. The sequence is that of Ion-translocating oxidoreductase complex subunit D from Haemophilus influenzae (strain ATCC 51907 / DSM 11121 / KW20 / Rd).